The chain runs to 321 residues: uncharacterized protein (321 aa).

At M1–K6 the chain is on the extracellular side. A helical membrane pass occupies residues I7–F29. The Cytoplasmic segment spans residues P30–T34. A helical transmembrane segment spans residues W35–A57. Residues D58–Q69 are Extracellular-facing. Residues V70–L92 form a helical membrane-spanning segment. The Cytoplasmic segment spans residues H93–E97. Residues I98–L120 traverse the membrane as a helical segment. The Extracellular segment spans residues A121–V129. The helical transmembrane segment at A130 to F150 threads the bilayer. The Cytoplasmic segment spans residues A151 to P159. The helical transmembrane segment at G160–V180 threads the bilayer. The Extracellular segment spans residues K181–K190. The helical transmembrane segment at A191–V211 threads the bilayer. Topologically, residues S212–S221 are cytoplasmic. The chain crosses the membrane as a helical span at residues G222–L242. Residues C243–G267 lie on the Extracellular side of the membrane. The chain crosses the membrane as a helical span at residues L268–F288. The Cytoplasmic portion of the chain corresponds to S289–L321.

This sequence belongs to the bile acid:sodium symporter (BASS) (TC 2.A.28) family.

It localises to the cell membrane. This is an uncharacterized protein from Bacillus subtilis (strain 168).